Here is a 276-residue protein sequence, read N- to C-terminus: Rhomboid protease GlpG (276 aa).

The next 6 helical transmembrane spans lie at 94-114 (GPFTLLLMAACILVFIIMNVV), 142-162 (ALMHFSVLHILFNLLWWWYLG), 169-189 (LGSGKLIVITIISALLSGYVQ), 192-212 (FSGPWFGGLSGVVYALMGYAW), 229-249 (LITFALLWLIAGWFDLFGMSI), and 250-270 (ANGAHVTGLAVGLAMAFADTL). The active-site Nucleophile is S201. H254 is a catalytic residue.

Belongs to the peptidase S54 family.

It is found in the cell inner membrane. It catalyses the reaction Cleaves type-1 transmembrane domains using a catalytic dyad composed of serine and histidine that are contributed by different transmembrane domains.. Its function is as follows. Rhomboid-type serine protease that catalyzes intramembrane proteolysis. The polypeptide is Rhomboid protease GlpG (Enterobacter sp. (strain 638)).